The primary structure comprises 617 residues: Glutamyl-tRNA(Gln) amidotransferase subunit B, mitochondrial (617 aa).

Residues 1–56 (MPRIPTSVLGKYLLSGQISRQGCVGARQITRHSALPSAAVSVANSARLLHVSSETV) constitute a mitochondrion transit peptide. Residues 53 to 90 (SETVPPPPAQPVPLRKQLKDEAKKAKKQGKKKSKGDSQ) form a disordered region. A compositionally biased stretch (basic residues) spans 76-85 (KAKKQGKKKS).

This sequence belongs to the GatB/GatE family. GatB subfamily. In terms of assembly, subunit of the heterotrimeric GatCAB amidotransferase (AdT) complex, composed of A, B and C subunits.

The protein resides in the mitochondrion. It carries out the reaction L-glutamyl-tRNA(Gln) + L-glutamine + ATP + H2O = L-glutaminyl-tRNA(Gln) + L-glutamate + ADP + phosphate + H(+). Allows the formation of correctly charged Gln-tRNA(Gln) through the transamidation of misacylated Glu-tRNA(Gln) in the mitochondria. The reaction takes place in the presence of glutamine and ATP through an activated gamma-phospho-Glu-tRNA(Gln). The polypeptide is Glutamyl-tRNA(Gln) amidotransferase subunit B, mitochondrial (Fusarium vanettenii (strain ATCC MYA-4622 / CBS 123669 / FGSC 9596 / NRRL 45880 / 77-13-4) (Fusarium solani subsp. pisi)).